The sequence spans 363 residues: Pyrimidine monooxygenase RutA (363 aa).

Residues 49–50 (IK), Asn115, Glu124, 140–141 (RY), and Ser190 contribute to the FMN site.

It belongs to the NtaA/SnaA/DszA monooxygenase family. RutA subfamily.

It carries out the reaction uracil + FMNH2 + NADH + O2 = (Z)-3-ureidoacrylate + FMN + NAD(+) + H2O + H(+). The enzyme catalyses thymine + FMNH2 + NADH + O2 = (Z)-2-methylureidoacrylate + FMN + NAD(+) + H2O + H(+). Functionally, catalyzes the pyrimidine ring opening between N-3 and C-4 by an unusual flavin hydroperoxide-catalyzed mechanism, adding oxygen atoms in the process to yield ureidoacrylate peracid, that immediately reacts with FMN forming ureidoacrylate and FMN-N(5)-oxide. The FMN-N(5)-oxide reacts spontaneously with NADH to produce FMN. Requires the flavin reductase RutF to regenerate FMN in vivo. In Pantoea ananatis (strain LMG 20103), this protein is Pyrimidine monooxygenase RutA.